Reading from the N-terminus, the 118-residue chain is Large ribosomal subunit protein uL18 (118 aa).

The protein belongs to the universal ribosomal protein uL18 family. Part of the 50S ribosomal subunit; part of the 5S rRNA/L5/L18/L25 subcomplex. Contacts the 5S and 23S rRNAs.

In terms of biological role, this is one of the proteins that bind and probably mediate the attachment of the 5S RNA into the large ribosomal subunit, where it forms part of the central protuberance. This chain is Large ribosomal subunit protein uL18, found in Cupriavidus pinatubonensis (strain JMP 134 / LMG 1197) (Cupriavidus necator (strain JMP 134)).